Consider the following 128-residue polypeptide: Glycophorin-C (128 aa).

The span at 1 to 12 shows a compositional bias: polar residues; that stretch reads MWSTRSPNSTAW. The tract at residues 1-48 is disordered; the sequence is MWSTRSPNSTAWPLSLEPDPGMASASTTMHTTTIAEPDPGMSGWPDGR. At 1 to 57 the chain is on the extracellular side; that stretch reads MWSTRSPNSTAWPLSLEPDPGMASASTTMHTTTIAEPDPGMSGWPDGRMETSTPTIM. Serine 3 carries an O-linked (GalNAc...) serine glycan. Threonine 4 carries an O-linked (GalNAc...) threonine glycan. An O-linked (GalNAc...) serine glycan is attached at serine 6. Asparagine 8 carries an N-linked (GlcNAc...) asparagine glycan. Serine 9 carries O-linked (GalNAc...) serine glycosylation. A glycan (O-linked (GalNAc...) threonine) is linked at threonine 10. O-linked (GalNAc...) serine glycosylation is found at serine 15, serine 24, and serine 26. Residues 22–33 are compositionally biased toward low complexity; sequence MASASTTMHTTT. Threonine 27, threonine 28, threonine 31, threonine 32, and threonine 33 each carry an O-linked (GalNAc...) threonine glycan. Serine 42 carries O-linked (GalNAc...) serine glycosylation. Residues 58 to 81 form a helical; Signal-anchor for type III membrane protein membrane-spanning segment; sequence DIVVIAGVIAAVAIVLVSLLFVML. Residues 82–128 lie on the Cytoplasmic side of the membrane; the sequence is RYMYRHKGTYHTNEAKGTEFAESADAALQGDPALQDAGDSSRKEYFI. Residues serine 104 and serine 122 each carry the phosphoserine modification. The disordered stretch occupies residues 108 to 128; sequence ALQGDPALQDAGDSSRKEYFI.

It belongs to the glycophorin-C family. Post-translationally, O-glycosylated with core 1 or possibly core 8 glycans. Glycophorin-C is expressed in erythrocytes. Glycophorin-D and IsoGPC are ubiquitously expressed.

It is found in the cell membrane. Functionally, this protein is a minor sialoglycoprotein in human erythrocyte membranes. The blood group Gerbich antigens and receptors for Plasmodium falciparum merozoites are most likely located within the extracellular domain. Glycophorin-C plays an important role in regulating the stability of red cells. The protein is Glycophorin-C (GYPC) of Homo sapiens (Human).